The chain runs to 230 residues: MTQDELKRLVGQAAADYVIQNVPEGAVIGVGTGSTANCFIDALAAVKSRYRGAVSSSVATTERLKSHGIKVFDLNEIESLQVYVDGADEIDASGAMIKGGGGALTREKIVASVADTFVCIADGSKRVPVLGAFPLPIEVVPMARTAIGRRVTALGGVPVLRVTQDGAPYITDNGNEIIDVKGLQIVDPRGFEAQINAWPGVVTVGLFAERGANLCLLGTPNGVETIVYPG.

Substrate-binding positions include 32–35 (TGST), 85–88 (DGAD), and 98–101 (KGGG). E107 serves as the catalytic Proton acceptor. K125 lines the substrate pocket.

Belongs to the ribose 5-phosphate isomerase family. Homodimer.

The enzyme catalyses aldehydo-D-ribose 5-phosphate = D-ribulose 5-phosphate. Its pathway is carbohydrate degradation; pentose phosphate pathway; D-ribose 5-phosphate from D-ribulose 5-phosphate (non-oxidative stage): step 1/1. Its function is as follows. Catalyzes the reversible conversion of ribose-5-phosphate to ribulose 5-phosphate. The protein is Ribose-5-phosphate isomerase A of Burkholderia ambifaria (strain MC40-6).